We begin with the raw amino-acid sequence, 124 residues long: Small ribosomal subunit protein uS12 (124 aa).

Residues 1–24 (MPTINQLIKKPRKSQKEKTASPAL) are disordered. D89 is modified (3-methylthioaspartic acid).

This sequence belongs to the universal ribosomal protein uS12 family. Part of the 30S ribosomal subunit. Contacts proteins S8 and S17. May interact with IF1 in the 30S initiation complex.

Functionally, with S4 and S5 plays an important role in translational accuracy. Its function is as follows. Interacts with and stabilizes bases of the 16S rRNA that are involved in tRNA selection in the A site and with the mRNA backbone. Located at the interface of the 30S and 50S subunits, it traverses the body of the 30S subunit contacting proteins on the other side and probably holding the rRNA structure together. The combined cluster of proteins S8, S12 and S17 appears to hold together the shoulder and platform of the 30S subunit. The chain is Small ribosomal subunit protein uS12 from Borrelia hermsii (strain HS1 / DAH).